We begin with the raw amino-acid sequence, 305 residues long: Probable 5-dehydro-4-deoxyglucarate dehydratase (305 aa).

Belongs to the DapA family.

The enzyme catalyses 5-dehydro-4-deoxy-D-glucarate + H(+) = 2,5-dioxopentanoate + CO2 + H2O. It functions in the pathway carbohydrate acid metabolism; D-glucarate degradation; 2,5-dioxopentanoate from D-glucarate: step 2/2. The protein is Probable 5-dehydro-4-deoxyglucarate dehydratase of Xanthomonas campestris pv. campestris (strain 8004).